We begin with the raw amino-acid sequence, 648 residues long: Transcriptional regulator ManR (648 aa).

PRD domains lie at 187–292 (KFLH…YPLQ) and 297–404 (LENA…MQGS). Residues histidine 222, histidine 281, histidine 334, and histidine 393 each carry the phosphohistidine; by HPr modification. Residues 409–500 (KKAVIVCHMG…FIRQLGESHR (92 aa)) enclose the PTS EIIB type-2 domain. Phosphocysteine; by EIIA is present on cysteine 415. Residues 510-648 (NNTTPFLVFL…VMTFLSHLDY (139 aa)) enclose the PTS EIIA type-2 domain. Position 570 is a phosphohistidine; by EIIB (histidine 570).

This sequence belongs to the transcriptional antiterminator BglG family.

The catalysed reaction is D-mannose(out) + N(pros)-phospho-L-histidyl-[protein] = D-mannose 6-phosphate(in) + L-histidyl-[protein]. The regulatory activity of ManR is modulated by phosphorylation and dephosphorylation of the various ManR domains. It becomes activated via phosphoryl group transfer from PEP, EI and HPr on the two conserved histidine residues in the PRD 2 domain, whereas phosphorylation of the EIIA-like domain on His-570 by the PTS EIIB-Man domain of ManP inactivates ManR. Functionally, positively regulates the expression of the mannose operon that consists of three genes, manP, manA, and yjdF, which are responsible for the transport and utilization of mannose. Also activates its own expression. This chain is Transcriptional regulator ManR (manR), found in Bacillus subtilis (strain 168).